The chain runs to 130 residues: Small ribosomal subunit protein uS9 (130 aa).

It belongs to the universal ribosomal protein uS9 family.

The chain is Small ribosomal subunit protein uS9 from Tolumonas auensis (strain DSM 9187 / NBRC 110442 / TA 4).